The sequence spans 181 residues: NADH-quinone oxidoreductase subunit I (181 aa).

2 consecutive 4Fe-4S ferredoxin-type domains span residues 51-80 (TRNSNGSERCVACNLCSAVCPVNCISLKKS) and 90-119 (KSFQINLSRCIFCGLCEEACPTMAIQLTPD). Residues cysteine 60, cysteine 63, cysteine 66, cysteine 70, cysteine 99, cysteine 102, cysteine 105, and cysteine 109 each coordinate [4Fe-4S] cluster.

This sequence belongs to the complex I 23 kDa subunit family. In terms of assembly, NDH-1 is composed of 13 different subunits. Subunits NuoA, H, J, K, L, M, N constitute the membrane sector of the complex. Requires [4Fe-4S] cluster as cofactor.

The protein localises to the cell membrane. The enzyme catalyses a quinone + NADH + 5 H(+)(in) = a quinol + NAD(+) + 4 H(+)(out). Functionally, NDH-1 shuttles electrons from NADH, via FMN and iron-sulfur (Fe-S) centers, to quinones in the respiratory chain. The immediate electron acceptor for the enzyme in this species is believed to be ubiquinone. Couples the redox reaction to proton translocation (for every two electrons transferred, four hydrogen ions are translocated across the cytoplasmic membrane), and thus conserves the redox energy in a proton gradient. The protein is NADH-quinone oxidoreductase subunit I of Buchnera aphidicola subsp. Cinara cedri (strain Cc).